The chain runs to 239 residues: ATP-dependent dethiobiotin synthetase BioD (239 aa).

ATP is bound at residue 15–20; sequence EIGKTF. T19 contacts Mg(2+). K40 is a catalytic residue. ATP contacts are provided by residues D57, 118-121, and 178-179; these read EGVG and NH. Positions 57 and 118 each coordinate Mg(2+).

It belongs to the dethiobiotin synthetase family. In terms of assembly, homodimer. Requires Mg(2+) as cofactor.

It is found in the cytoplasm. It catalyses the reaction (7R,8S)-7,8-diammoniononanoate + CO2 + ATP = (4R,5S)-dethiobiotin + ADP + phosphate + 3 H(+). It functions in the pathway cofactor biosynthesis; biotin biosynthesis; biotin from 7,8-diaminononanoate: step 1/2. Its function is as follows. Catalyzes a mechanistically unusual reaction, the ATP-dependent insertion of CO2 between the N7 and N8 nitrogen atoms of 7,8-diaminopelargonic acid (DAPA, also called 7,8-diammoniononanoate) to form a ureido ring. This Burkholderia cenocepacia (strain ATCC BAA-245 / DSM 16553 / LMG 16656 / NCTC 13227 / J2315 / CF5610) (Burkholderia cepacia (strain J2315)) protein is ATP-dependent dethiobiotin synthetase BioD.